The sequence spans 184 residues: ATP synthase subunit b, chloroplastic (184 aa).

Residues 29 to 49 traverse the membrane as a helical segment; that stretch reads INIINLGIVIGLLVYLGEGVL.

Belongs to the ATPase B chain family. F-type ATPases have 2 components, F(1) - the catalytic core - and F(0) - the membrane proton channel. F(1) has five subunits: alpha(3), beta(3), gamma(1), delta(1), epsilon(1). F(0) has four main subunits: a(1), b(1), b'(1) and c(10-14). The alpha and beta chains form an alternating ring which encloses part of the gamma chain. F(1) is attached to F(0) by a central stalk formed by the gamma and epsilon chains, while a peripheral stalk is formed by the delta, b and b' chains.

The protein resides in the plastid. It localises to the chloroplast thylakoid membrane. Its function is as follows. F(1)F(0) ATP synthase produces ATP from ADP in the presence of a proton or sodium gradient. F-type ATPases consist of two structural domains, F(1) containing the extramembraneous catalytic core and F(0) containing the membrane proton channel, linked together by a central stalk and a peripheral stalk. During catalysis, ATP synthesis in the catalytic domain of F(1) is coupled via a rotary mechanism of the central stalk subunits to proton translocation. Functionally, component of the F(0) channel, it forms part of the peripheral stalk, linking F(1) to F(0). The polypeptide is ATP synthase subunit b, chloroplastic (Psilotum nudum (Whisk fern)).